The sequence spans 276 residues: Undecaprenyl-diphosphatase (276 aa).

The next 7 membrane-spanning stretches (helical) occupy residues 48-68 (AANS…AIVF), 92-112 (LTIA…FLFE), 119-139 (LFSV…MLIA), 155-175 (ITYK…WPGF), 196-216 (ADFT…LKLV), 229-249 (FFLV…KFFL), and 255-275 (IKLV…IMLV).

The protein belongs to the UppP family.

The protein localises to the cell membrane. The catalysed reaction is di-trans,octa-cis-undecaprenyl diphosphate + H2O = di-trans,octa-cis-undecaprenyl phosphate + phosphate + H(+). Its function is as follows. Catalyzes the dephosphorylation of undecaprenyl diphosphate (UPP). Confers resistance to bacitracin. This is Undecaprenyl-diphosphatase from Bacillus velezensis (strain DSM 23117 / BGSC 10A6 / LMG 26770 / FZB42) (Bacillus amyloliquefaciens subsp. plantarum).